The primary structure comprises 396 residues: Elongation factor Tu (396 aa).

A tr-type G domain is found at 11–205 (KPHVNIGTIG…VIDEYIPTPV (195 aa)). The G1 stretch occupies residues 20 to 27 (GHVDHGKT). Position 20–27 (20–27 (GHVDHGKT)) interacts with GTP. Residue threonine 27 participates in Mg(2+) binding. The tract at residues 61–65 (GITIN) is G2. Residues 82–85 (DAPG) form a G3 region. Residues 82 to 86 (DAPGH) and 137 to 140 (NKTD) each bind GTP. The segment at 137–140 (NKTD) is G4. The tract at residues 175 to 177 (SAL) is G5.

The protein belongs to the TRAFAC class translation factor GTPase superfamily. Classic translation factor GTPase family. EF-Tu/EF-1A subfamily. As to quaternary structure, monomer.

It localises to the cytoplasm. The catalysed reaction is GTP + H2O = GDP + phosphate + H(+). In terms of biological role, GTP hydrolase that promotes the GTP-dependent binding of aminoacyl-tRNA to the A-site of ribosomes during protein biosynthesis. The polypeptide is Elongation factor Tu (Oenococcus oeni (strain ATCC BAA-331 / PSU-1)).